A 500-amino-acid polypeptide reads, in one-letter code: Cytochrome P450 71B22 (500 aa).

A helical transmembrane segment spans residues 1–21; sequence MSISLYFLLLLPLFLIFFKKL. C441 lines the heme pocket.

The protein belongs to the cytochrome P450 family. Requires heme as cofactor.

The protein localises to the membrane. This chain is Cytochrome P450 71B22 (CYP71B22), found in Arabidopsis thaliana (Mouse-ear cress).